Consider the following 396-residue polypeptide: 1-deoxy-D-xylulose 5-phosphate reductoisomerase (396 aa).

NADPH-binding residues include Thr-15, Gly-16, Ser-17, Ile-18, Gly-41, and Asn-129. Lys-130 serves as a coordination point for 1-deoxy-D-xylulose 5-phosphate. Residue Glu-131 participates in NADPH binding. Asp-155 is a binding site for Mn(2+). 1-deoxy-D-xylulose 5-phosphate contacts are provided by Ser-156, Glu-157, Ser-182, and His-205. Residue Glu-157 participates in Mn(2+) binding. Gly-211 provides a ligand contact to NADPH. The 1-deoxy-D-xylulose 5-phosphate site is built by Ser-218, Asn-223, Lys-224, and Glu-227. Glu-227 contributes to the Mn(2+) binding site.

Belongs to the DXR family. Mg(2+) serves as cofactor. Mn(2+) is required as a cofactor.

It catalyses the reaction 2-C-methyl-D-erythritol 4-phosphate + NADP(+) = 1-deoxy-D-xylulose 5-phosphate + NADPH + H(+). The protein operates within isoprenoid biosynthesis; isopentenyl diphosphate biosynthesis via DXP pathway; isopentenyl diphosphate from 1-deoxy-D-xylulose 5-phosphate: step 1/6. In terms of biological role, catalyzes the NADPH-dependent rearrangement and reduction of 1-deoxy-D-xylulose-5-phosphate (DXP) to 2-C-methyl-D-erythritol 4-phosphate (MEP). The protein is 1-deoxy-D-xylulose 5-phosphate reductoisomerase of Xanthomonas axonopodis pv. citri (strain 306).